Here is a 1795-residue protein sequence, read N- to C-terminus: Putative surface cell antigen sca2 (1795 aa).

The first 33 residues, 1–33 (MNLQNSHSKKYVLTFFMSTCLLTSSFLSTSARA), serve as a signal peptide directing secretion. Residues 360–373 (FLNNNDTTKPSTGR) show a composition bias toward polar residues. Disordered stretches follow at residues 360-391 (FLNN…SNQS), 664-709 (LEQT…SSNS), and 1354-1441 (KQEN…DEEL). The segment covering 672-700 (PNPPPLPLNGGIPNPPPLPLNGSMPPPPL) has biased composition (pro residues). 2 stretches are compositionally biased toward basic and acidic residues: residues 1364 to 1383 (SSTK…EQSD) and 1398 to 1409 (SKNDKSSDDKKS). Residues 1417 to 1432 (DEDDTGYATDEEELEE) show a composition bias toward acidic residues. The Autotransporter domain maps to 1516–1795 (ETSINRGVWI…QGLIKLKVNL (280 aa)).

The protein resides in the cell outer membrane. The protein is Putative surface cell antigen sca2 (sca2) of Rickettsia conorii (strain ATCC VR-613 / Malish 7).